Reading from the N-terminus, the 196-residue chain is Imidazoleglycerol-phosphate dehydratase (196 aa).

The protein belongs to the imidazoleglycerol-phosphate dehydratase family.

It is found in the cytoplasm. The catalysed reaction is D-erythro-1-(imidazol-4-yl)glycerol 3-phosphate = 3-(imidazol-4-yl)-2-oxopropyl phosphate + H2O. It participates in amino-acid biosynthesis; L-histidine biosynthesis; L-histidine from 5-phospho-alpha-D-ribose 1-diphosphate: step 6/9. This chain is Imidazoleglycerol-phosphate dehydratase, found in Ralstonia nicotianae (strain ATCC BAA-1114 / GMI1000) (Ralstonia solanacearum).